Consider the following 383-residue polypeptide: Pheromone-regulated membrane protein 10 (383 aa).

At 1 to 65 the chain is on the cytoplasmic side; it reads MIVSFGDATT…ILADTNLYPP (65 aa). A helical membrane pass occupies residues 66–86; that stretch reads WMCVLLYAFCSAMVTPYAFGG. A topological domain (extracellular) is located at residue D87. Residues 88 to 108 traverse the membrane as a helical segment; it reads WVNLAISFFMGLCVGSLQFIL. The Cytoplasmic segment spans residues 109-117; it reads SQKSYMYSN. A helical transmembrane segment spans residues 118–138; the sequence is VFEISASIVVSFCGRAFGSIP. Residues 139–141 lie on the Extracellular side of the membrane; sequence RSH. The helical transmembrane segment at 142-162 threads the bilayer; the sequence is ICFGAVTQGSLALILPGYIIL. Residues 163 to 180 are Cytoplasmic-facing; that stretch reads CGALELQSRSLVAGAVRM. A helical transmembrane segment spans residues 181–201; the sequence is FYAIIYSLFLGFGITLGSALF. At 202-216 the chain is on the extracellular side; sequence GWMYHNATNEISCPQ. The chain crosses the membrane as a helical span at residues 217–237; sequence LISPWFRFLFVPAFTISISLL. Over 238 to 241 the chain is Cytoplasmic; it reads NQAH. Residues 242–262 traverse the membrane as a helical segment; the sequence is ISQLPVMVFISCTGYVVTYWA. Over 263 to 271 the chain is Extracellular; the sequence is GKHFANSTE. A helical membrane pass occupies residues 272–292; the sequence is FTAALAAFVIGVLGNLYSRIW. Residue K293 is a topological domain, cytoplasmic. The helical transmembrane segment at 294 to 314 threads the bilayer; the sequence is GLAVSAMLPAIFVQVPSGIAS. At 315–352 the chain is on the extracellular side; sequence QNSLLSGLQSANTIVNANETITTSTSDPSSSMSFGMTM. Residues 353–373 traverse the membrane as a helical segment; the sequence is IQVCVGISVGLFASSLFVYPF. The Cytoplasmic segment spans residues 374–383; sequence GKKKTGLFSL.

It belongs to the ThrE exporter (TC 2.A.79) family.

The protein localises to the membrane. The protein is Pheromone-regulated membrane protein 10 (PRM10) of Saccharomyces cerevisiae (strain ATCC 204508 / S288c) (Baker's yeast).